We begin with the raw amino-acid sequence, 435 residues long: CBL-interacting protein kinase 28 (435 aa).

The Protein kinase domain occupies 11 to 265 (YVIGRQLGQG…ISRIKRSAWY (255 aa)). Residues 17–25 (LGQGTFGKV) and Lys40 each bind ATP. Asp133 (proton acceptor) is an active-site residue. Positions 151-180 (DFGLSALAESRRQDGLLHTACGTPAYVAPE) are activation loop. The 47-residue stretch at 283-329 (CTSEAPFSGPTICISSERNQEPPNLHNLNAFDIISLSTGFDLSGLFG) folds into the NAF domain. The interval 334-363 (RRESLFTSRKPAAAVLVKLKELAKALNLKV) is PPI.

Belongs to the protein kinase superfamily. CAMK Ser/Thr protein kinase family. SNF1 subfamily. The cofactor is Mn(2+).

It catalyses the reaction L-seryl-[protein] + ATP = O-phospho-L-seryl-[protein] + ADP + H(+). It carries out the reaction L-threonyl-[protein] + ATP = O-phospho-L-threonyl-[protein] + ADP + H(+). CIPK serine-threonine protein kinases interact with CBL proteins. Binding of a CBL protein to the regulatory NAF domain of CIPK protein lead to the activation of the kinase in a calcium-dependent manner. This chain is CBL-interacting protein kinase 28 (CIPK28), found in Oryza sativa subsp. japonica (Rice).